Reading from the N-terminus, the 205-residue chain is LexA repressor (205 aa).

A DNA-binding region (H-T-H motif) is located at residues 28–48 (RAELMRAFDFRSPNAAESHLR). Residues Ser120 and Lys159 each act as for autocatalytic cleavage activity in the active site.

It belongs to the peptidase S24 family. Homodimer.

The enzyme catalyses Hydrolysis of Ala-|-Gly bond in repressor LexA.. Functionally, represses a number of genes involved in the response to DNA damage (SOS response), including recA and lexA. In the presence of single-stranded DNA, RecA interacts with LexA causing an autocatalytic cleavage which disrupts the DNA-binding part of LexA, leading to derepression of the SOS regulon and eventually DNA repair. The polypeptide is LexA repressor (Acidithiobacillus ferrooxidans (strain ATCC 23270 / DSM 14882 / CIP 104768 / NCIMB 8455) (Ferrobacillus ferrooxidans (strain ATCC 23270))).